Consider the following 330-residue polypeptide: B-cell receptor CD22 (330 aa).

The signal sequence occupies residues 1–17 (MHLLGPWLLLLEYLAFS). The 119-residue stretch at 18-136 (DSSKWAFEHP…MERIHLNVSE (119 aa)) folds into the Ig-like V-type domain. The Extracellular segment spans residues 18–330 (DSSKWAFEHP…VFLQVQYAPE (313 aa)). Intrachain disulfides connect cysteine 37–cysteine 165, cysteine 42–cysteine 100, and cysteine 159–cysteine 217. N-linked (GlcNAc...) asparagine glycosylation is found at asparagine 65, asparagine 99, and asparagine 110. Arginine 118 contributes to the N-acetylneuraminate binding site. N-linked (GlcNAc...) asparagine glycans are attached at residues asparagine 133, asparagine 162, asparagine 187, and asparagine 229. 2 Ig-like C2-type domains span residues 141 to 233 (PHIQ…DTVQ) and 240 to 324 (PKLK…VFLQ). An intrachain disulfide couples cysteine 263 to cysteine 307.

It belongs to the immunoglobulin superfamily. SIGLEC (sialic acid binding Ig-like lectin) family. In terms of assembly, predominantly monomer of isoform CD22-beta. Also found as heterodimer of isoform CD22-beta and a shorter isoform. Interacts with PTPN6/SHP-1, LYN, SYK, PIK3R1/PIK3R2 and PLCG1 upon phosphorylation. Interacts with GRB2, INPP5D and SHC1 upon phosphorylation. May form a complex with INPP5D/SHIP, GRB2 and SHC1.

The protein localises to the cell membrane. Its function is as follows. Most highly expressed siglec (sialic acid-binding immunoglobulin-like lectin) on B-cells that plays a role in various aspects of B-cell biology including differentiation, antigen presentation, and trafficking to bone marrow. Binds to alpha 2,6-linked sialic acid residues of surface molecules such as CD22 itself, CD45 and IgM in a cis configuration. Can also bind to ligands on other cells as an adhesion molecule in a trans configuration. Acts as an inhibitory coreceptor on the surface of B-cells and inhibits B-cell receptor induced signaling, characterized by inhibition of the calcium mobilization and cellular activation. Mechanistically, the immunoreceptor tyrosine-based inhibitory motif domain is phosphorylated by the Src kinase LYN, which in turn leads to the recruitment of the protein tyrosine phosphatase 1/PTPN6, leading to the negative regulation of BCR signaling. If this negative signaling from is of sufficient strength, apoptosis of the B-cell can be induced. This is B-cell receptor CD22 from Pongo pygmaeus (Bornean orangutan).